The primary structure comprises 294 residues: Endonuclease G, mitochondrial (294 aa).

The transit peptide at 1-44 (MRALRAGLTLALGAGLGAAAEHWRRREGKAPGLLGRVPLLPVVA) directs the protein to the mitochondrion. Thr-125 carries the post-translational modification Phosphothreonine. His-138 (proton acceptor) is an active-site residue. Residue Asn-169 coordinates Mg(2+). Positions 283-293 (AGNLKAITAGS) are essential for deoxyribonuclease activity.

The protein belongs to the DNA/RNA non-specific endonuclease family. As to quaternary structure, homodimer; disulfide-linked. Homodimerization is essential for its activity. Interacts with YWHAG. The cofactor is Mg(2+). Post-translationally, GSK3-beta-mediated phosphorylation at Thr-125 is necessary for its interaction with YWHAG and the induction of autophagy.

The protein localises to the mitochondrion. Its function is as follows. Endonuclease that preferentially catalyzes the cleavage of double-stranded 5-hydroxymethylcytosine (5hmC)-modified DNA. The 5hmC-modified nucleotide does not increase the binding affinity, but instead increases the efficiency of cutting and specifies the site of cleavage for the modified DNAs. Shows significantly higher affinity for four-stranded Holliday junction over duplex and single-stranded DNAs. Promotes conservative recombination when the DNA is 5hmC-modified. Promotes autophagy through the suppression of mTOR by its phosphorylation-mediated interaction with YWHAG and its endonuclease activity-mediated DNA damage response. GSK3-beta mediated phosphorylation of ENDOG enhances its interaction with YWHAG, leading to the release of TSC2 and PIK3C3 from YWHAG resulting in mTOR pathway suppression and autophagy initiation. Promotes cleavage of mtDNA in response to oxidative and nitrosative stress, in turn inducing compensatory mtDNA replication. The polypeptide is Endonuclease G, mitochondrial (Endog) (Mus musculus (Mouse)).